The chain runs to 398 residues: Small ribosomal subunit protein mS29 (398 aa).

Residues 1-21 (MMLKGITRLISRIHKLDPGRF) constitute a mitochondrion transit peptide. The segment at 39-67 (QVPVESPRAISRTNENDPAKHGDQHEGQH) is disordered. A compositionally biased stretch (basic and acidic residues) spans 52–66 (NENDPAKHGDQHEGQ). GTP contacts are provided by residues Met100 and 128–135 (GEKGTGKT). An N6-acetyllysine mark is found at Lys175 and Lys207.

The protein belongs to the mitochondrion-specific ribosomal protein mS29 family. As to quaternary structure, component of the mitochondrial small ribosomal subunit (mt-SSU). Mature mammalian 55S mitochondrial ribosomes consist of a small (28S) and a large (39S) subunit. The 28S small subunit contains a 12S ribosomal RNA (12S mt-rRNA) and 30 different proteins. The 39S large subunit contains a 16S rRNA (16S mt-rRNA), a copy of mitochondrial valine transfer RNA (mt-tRNA(Val)), which plays an integral structural role, and 52 different proteins. Interacts with DELE1. Interacts with NOA1. In terms of tissue distribution, ubiquitous.

The protein localises to the mitochondrion. The enzyme catalyses GTP + H2O = GDP + phosphate + H(+). In terms of biological role, as a component of the mitochondrial small ribosomal subunit, it plays a role in the translation of mitochondrial mRNAs. Involved in mediating interferon-gamma-induced cell death. Displays GTPase activity in vitro. The polypeptide is Small ribosomal subunit protein mS29 (Homo sapiens (Human)).